The following is a 364-amino-acid chain: Ferrochelatase (364 aa).

2 residues coordinate Fe cation: histidine 213 and glutamate 294.

This sequence belongs to the ferrochelatase family.

It is found in the cytoplasm. The catalysed reaction is heme b + 2 H(+) = protoporphyrin IX + Fe(2+). The protein operates within porphyrin-containing compound metabolism; protoheme biosynthesis; protoheme from protoporphyrin-IX: step 1/1. In terms of biological role, catalyzes the ferrous insertion into protoporphyrin IX. The polypeptide is Ferrochelatase (Chromobacterium violaceum (strain ATCC 12472 / DSM 30191 / JCM 1249 / CCUG 213 / NBRC 12614 / NCIMB 9131 / NCTC 9757 / MK)).